The chain runs to 205 residues: LexA repressor (205 aa).

The H-T-H motif DNA-binding region spans 28–48 (VREIGEAVGLASSSTVHGHLA). Residues Ser127 and Lys165 each act as for autocatalytic cleavage activity in the active site.

This sequence belongs to the peptidase S24 family. In terms of assembly, homodimer. In terms of processing, following treatment with mitomycin C protein levels begin to decrease after a 5-min lag and do not return to their original levels for at least 90 minutes.

The enzyme catalyses Hydrolysis of Ala-|-Gly bond in repressor LexA.. Represses dinA, dinB, dinC, recA genes and itself by binding to the 14 bp palindromic sequence 5'-CGAACNNNNGTTCG-3'; some genes have a tandem consensus sequence and their binding is cooperative. In the presence of single-stranded DNA, RecA interacts with LexA causing an autocatalytic cleavage which disrupts the DNA-binding part of LexA, leading to derepression of the SOS regulon and eventually DNA repair; autocleavage is maximal at pH 11 in the absence of RecA and ssDNA. The polypeptide is LexA repressor (Bacillus subtilis (strain 168)).